We begin with the raw amino-acid sequence, 250 residues long: Triosephosphate isomerase (250 aa).

9-11 is a binding site for substrate; that stretch reads NWK. The active-site Electrophile is the H96. The active-site Proton acceptor is the E166. Substrate contacts are provided by residues G172, S212, and 233–234; that span reads GG.

This sequence belongs to the triosephosphate isomerase family. As to quaternary structure, homodimer.

The protein resides in the cytoplasm. The enzyme catalyses D-glyceraldehyde 3-phosphate = dihydroxyacetone phosphate. It participates in carbohydrate biosynthesis; gluconeogenesis. It functions in the pathway carbohydrate degradation; glycolysis; D-glyceraldehyde 3-phosphate from glycerone phosphate: step 1/1. Functionally, involved in the gluconeogenesis. Catalyzes stereospecifically the conversion of dihydroxyacetone phosphate (DHAP) to D-glyceraldehyde-3-phosphate (G3P). The protein is Triosephosphate isomerase of Chlorobium phaeovibrioides (strain DSM 265 / 1930) (Prosthecochloris vibrioformis (strain DSM 265)).